A 374-amino-acid chain; its full sequence is Translocating chain-associated membrane protein 1 (374 aa).

Topologically, residues 1–29 are cytoplasmic; that stretch reads MAIRKKSNKNPPLLSHEFLLQNHADIVSC. The helical transmembrane segment at 30 to 50 threads the bilayer; the sequence is LAMLFLLGLMFEVTAKGAIIF. Residues 51–76 are Lumenal-facing; that stretch reads VALQYNVTRPATEEQATESASLYHYG. Asn56 carries N-linked (GlcNAc...) asparagine glycosylation. Residues 77 to 97 traverse the membrane as a helical segment; the sequence is IKDLATVLFYMLVAIIIHAII. The Cytoplasmic portion of the chain corresponds to 98–121; it reads QEYVLDKINRRMHFSKTKHSKFNE. The TLC domain maps to 117–326; that stretch reads SKFNESGQLS…NFQLRRWREH (210 aa). The helical transmembrane segment at 122-142 threads the bilayer; it reads SGQLSAFYLFACVWGTFILIS. Over 143-159 the chain is Lumenal; the sequence is ENYISDPTILWRAYPHN. The helical transmembrane segment at 160–180 threads the bilayer; that stretch reads LMTFQTKFFYISQLAYWLHAF. Residues 181–192 lie on the Cytoplasmic side of the membrane; sequence PELYFQKTKKED. Residues 193–213 traverse the membrane as a helical segment; sequence IPRQLVYIGLYLFHIAGAYLL. Over 214–217 the chain is Lumenal; that stretch reads NLNH. The helical transmembrane segment at 218 to 238 threads the bilayer; sequence LGLVLLVLHYFVEFLFHISRL. Over 239 to 251 the chain is Cytoplasmic; that stretch reads FYFSDEKYQKGFS. The helical transmembrane segment at 252–272 threads the bilayer; that stretch reads LWAVLFVLGRLLTLILSVLTV. The Lumenal segment spans residues 273 to 297; it reads GFGLARAENQKLDFSTGNFNVLAVR. The helical transmembrane segment at 298 to 318 threads the bilayer; sequence IAVLASICITQAFMMWKFINF. The Cytoplasmic segment spans residues 319-374; that stretch reads QLRRWREHSAFQAPPVKRKPAVTKGRSSRKGTENGVNGTVTSNGADSPRNRKEKSS. Residues 333-374 form a disordered region; the sequence is PVKRKPAVTKGRSSRKGTENGVNGTVTSNGADSPRNRKEKSS. Residues 334 to 347 are compositionally biased toward basic residues; the sequence is VKRKPAVTKGRSSR. A compositionally biased stretch (polar residues) spans 352-363; it reads NGVNGTVTSNGA. Position 365 is a phosphoserine (Ser365).

The protein belongs to the TRAM family. Interacts with SEC61B. May interact with Derlin-1/DERL1. In terms of processing, N-glycosylated.

The protein resides in the endoplasmic reticulum membrane. In terms of biological role, involved in the translocation of nascent protein chains into or through the endoplasmic reticulum (ER) membrane by facilitating the proper chain positioning at the SEC61 channel. Regulates the exposure of nascent secretory protein chain to the cytosol during translocation into the ER. May affect the phospholipid bilayer in the vicinity of the lateral gate of the SEC61 channel, thereby facilitating ER protein transport. Intimately associates with transmembrane (TM) domain of nascent membrane proteins during the entire integration process into the ER membrane. Associates with the second TM domain of G-protein-coupled receptor opsin/OPSD nascent chain in the ER membrane, which may facilitate its integration into the membrane. Under conditions of ER stress, participates in the disposal of misfolded ER membrane proteins during the unfolded protein response (UPR), an integrated stress response (ISR) pathway, by selectively retrotranslocating misfolded ER-membrane proteins from the ER into the cytosol where they are ubiquitinated and degraded by the proteasome. This Mus musculus (Mouse) protein is Translocating chain-associated membrane protein 1.